Here is a 364-residue protein sequence, read N- to C-terminus: Aminomethyltransferase (364 aa).

This sequence belongs to the GcvT family. The glycine cleavage system is composed of four proteins: P, T, L and H.

It carries out the reaction N(6)-[(R)-S(8)-aminomethyldihydrolipoyl]-L-lysyl-[protein] + (6S)-5,6,7,8-tetrahydrofolate = N(6)-[(R)-dihydrolipoyl]-L-lysyl-[protein] + (6R)-5,10-methylene-5,6,7,8-tetrahydrofolate + NH4(+). Functionally, the glycine cleavage system catalyzes the degradation of glycine. The protein is Aminomethyltransferase of Salmonella dublin (strain CT_02021853).